Here is a 687-residue protein sequence, read N- to C-terminus: Chloride channel protein ClC-Ka (687 aa).

5 helical membrane-spanning segments follow: residues F52–G72, L94–I114, I161–G181, A204–I224, and Y236–F256. The Ca(2+) site is built by E259, E261, D278, and E281. Helical transmembrane passes span I282–C302, P325–G345, F396–A416, T417–G437, V458–V478, and L486–L506. Residues A507 to K687 are Cytoplasmic-facing. CBS domains lie at M551–S609 and C626–K687.

Belongs to the chloride channel (TC 2.A.49) family. CLCNKA subfamily. In terms of assembly, homodimer. Interacts with BSND. As to expression, expressed predominantly in the kidney. Expressed strongly in the cortical thick ascending limb and the distal convoluted tubule, with minor expression in the S3 segment of the proximal tubule and the cortical collecting tubule.

The protein resides in the basolateral cell membrane. The catalysed reaction is chloride(in) = chloride(out). The enzyme catalyses bromide(in) = bromide(out). It carries out the reaction nitrate(in) = nitrate(out). It catalyses the reaction iodide(out) = iodide(in). Its activity is regulated as follows. Activated by extracellular Ca(2+) and inhibited by extracellular acidic pH. Its function is as follows. Anion-selective channel permeable to small monovalent anions with ion selectivity for chloride &gt; bromide &gt; nitrate &gt; iodide. Forms a homodimeric channel where each subunit has its own ion conduction pathway. Conducts double-barreled currents controlled by two types of gates, two fast gates that control each subunit independently and a slow common gate that opens and shuts off both subunits simultaneously. Assembles with the regulatory subunit BSND/Barttin for sorting at the basolateral plasma membrane domain. CLCNKA:BSND channels are activated upon membrane hyperpolarization mostly controlled by fast gating. Mediates transepithelial chloride transport from the lumen to interstitial compartment along the thin ascending limb of Henle's loop, contributing to generation of hypertonic medullary interstitium as a countercurrent system to achieve urine concentration. Conducts chloride currents in the stria vascularis of the inner ear to establish the endocochlear potential necessary for normal hearing. The sequence is that of Chloride channel protein ClC-Ka from Rattus norvegicus (Rat).